Consider the following 375-residue polypeptide: Succinyl-diaminopimelate desuccinylase (375 aa).

Zn(2+) is bound at residue H66. D68 is an active-site residue. D99 is a Zn(2+) binding site. The Proton acceptor role is filled by E133. Zn(2+) is bound by residues E134, E162, and H348.

This sequence belongs to the peptidase M20A family. DapE subfamily. Homodimer. The cofactor is Zn(2+). Co(2+) is required as a cofactor.

It carries out the reaction N-succinyl-(2S,6S)-2,6-diaminopimelate + H2O = (2S,6S)-2,6-diaminopimelate + succinate. It functions in the pathway amino-acid biosynthesis; L-lysine biosynthesis via DAP pathway; LL-2,6-diaminopimelate from (S)-tetrahydrodipicolinate (succinylase route): step 3/3. Catalyzes the hydrolysis of N-succinyl-L,L-diaminopimelic acid (SDAP), forming succinate and LL-2,6-diaminopimelate (DAP), an intermediate involved in the bacterial biosynthesis of lysine and meso-diaminopimelic acid, an essential component of bacterial cell walls. The protein is Succinyl-diaminopimelate desuccinylase of Escherichia coli O1:K1 / APEC.